The chain runs to 149 residues: MPTHLSKTRKHRGHVSAGHGRVGKHRKHPGGRGLAGGQHHHRTNMDKYHPGYFGKVGMRYFHKQGNHFWKPVLNLEKLWSLIPAEKREAYLSSTNPDVIPVIDLLPLGYSKVLGKGRIPKVPLVVRARWFSKEAERKITEAGGVVELVA.

Composition is skewed to basic residues over residues 1-14 (MPTH…HRGH) and 21-30 (RVGKHRKHPG). The tract at residues 1–42 (MPTHLSKTRKHRGHVSAGHGRVGKHRKHPGGRGLAGGQHHHR) is disordered.

Belongs to the universal ribosomal protein uL15 family.

This chain is Large ribosomal subunit protein uL15, found in Blumeria hordei (Barley powdery mildew).